The chain runs to 186 residues: Casparian strip membrane protein 3 (186 aa).

At 1–26 (MTKSTYVELGEEKTSNQKGNMKRGVS) the chain is on the cytoplasmic side. The helical transmembrane segment at 27–47 (ILDFILRLIAIVATLASAIAM) threads the bilayer. Over 48 to 74 (GTTDESLPFFTQFVRFRANYDDLPTLR) the chain is Extracellular. The helical transmembrane segment at 75-95 (FFVVASAIVSGYLILSLPLSI) threads the bilayer. Over 96 to 107 (LHIIRSSAGMTR) the chain is Cytoplasmic. Residues 108–128 (VIFIILDTVMLGLLTAGSSAA) traverse the membrane as a helical segment. The Extracellular portion of the chain corresponds to 129–161 (ASIVYLAHKGNRKANWFAFCQQYNSFCERISGS). A helical transmembrane segment spans residues 162–182 (LIGSFIAIPLFIMLILLSALV). Topologically, residues 183–186 (LSRR) are cytoplasmic.

It belongs to the Casparian strip membrane proteins (CASP) family. In terms of assembly, homodimer and heterodimers.

Its subcellular location is the cell membrane. In terms of biological role, regulates membrane-cell wall junctions and localized cell wall deposition. Required for establishment of the Casparian strip membrane domain (CSD) and the subsequent formation of Casparian strips, a cell wall modification of the root endodermis that determines an apoplastic barrier between the intraorganismal apoplasm and the extraorganismal apoplasm and prevents lateral diffusion. The sequence is that of Casparian strip membrane protein 3 from Medicago truncatula (Barrel medic).